The sequence spans 247 residues: MHQDTVRGKAFAMPLISPAYPAGPYRFRNREYLIITYRTDPQKLRDLVPEPLQVCEPMVKFEFIRMPDSTGFGDYTEGGQVIPVSFYGRRGSYTHCMFLDDHPPIAGGRELWGFPKKLASPTLRTETDTLVGTLDYGPVRVATGTMGYKHRAADLASVRASLAEPNFLLKIIPHVDGTPRICELVEYHLEDVHLRGAWTGPAALNLWSHALAPVAELPVLEVVSAVHLVADLTLALGKVVHDYLAKA.

K116 acts as the Schiff-base intermediate with acetoacetate in catalysis.

This sequence belongs to the ADC family.

The enzyme catalyses acetoacetate + H(+) = acetone + CO2. In terms of biological role, catalyzes the conversion of acetoacetate to acetone and carbon dioxide. The chain is Acetoacetate decarboxylase 1 from Mesorhizobium japonicum (strain LMG 29417 / CECT 9101 / MAFF 303099) (Mesorhizobium loti (strain MAFF 303099)).